A 346-amino-acid chain; its full sequence is Ribosomal RNA small subunit methyltransferase H (346 aa).

S-adenosyl-L-methionine contacts are provided by residues 46–48 (GGY), D63, F90, D113, and Q120. The disordered stretch occupies residues 270–327 (GGSAGSRHMPETHMRLPSFTPAVKGAVGPTPEEEERNPRARSAKLRAGIRTENSPLED).

Belongs to the methyltransferase superfamily. RsmH family.

It localises to the cytoplasm. The catalysed reaction is cytidine(1402) in 16S rRNA + S-adenosyl-L-methionine = N(4)-methylcytidine(1402) in 16S rRNA + S-adenosyl-L-homocysteine + H(+). In terms of biological role, specifically methylates the N4 position of cytidine in position 1402 (C1402) of 16S rRNA. This chain is Ribosomal RNA small subunit methyltransferase H, found in Brucella ovis (strain ATCC 25840 / 63/290 / NCTC 10512).